The primary structure comprises 453 residues: o-phthalyl amidase (453 aa).

As to quaternary structure, monomer. In terms of processing, the N-terminus is blocked.

It catalyses the reaction a phtalamide + H2O = phthalate + a primary amine. Inhibited by iodoacetate, p-hydroxymercuric benzoate and copper ions. Functionally, catalyzes the removal of the phthalyl group from phthalyl amides generating phthalate and an amine. The enzyme has a broad substrate specificity and hydrolyzes phthalylated amino acids, peptides, beta-lactams, aromatic and aliphatic amines; substitutions allowed on the phthalyl group include 6-F, 6-NH(2), 3-OH, and a nitrogen in the aromatic ring ortho to the carboxy group attached to the amine. The sequence is that of o-phthalyl amidase from Xanthobacter agilis.